A 103-amino-acid polypeptide reads, in one-letter code: Large ribosomal subunit protein bL21 (103 aa).

Belongs to the bacterial ribosomal protein bL21 family. In terms of assembly, part of the 50S ribosomal subunit. Contacts protein L20.

Functionally, this protein binds to 23S rRNA in the presence of protein L20. The polypeptide is Large ribosomal subunit protein bL21 (Chromobacterium violaceum (strain ATCC 12472 / DSM 30191 / JCM 1249 / CCUG 213 / NBRC 12614 / NCIMB 9131 / NCTC 9757 / MK)).